We begin with the raw amino-acid sequence, 275 residues long: Tryptophan synthase alpha chain (275 aa).

Residues Glu51 and Asp62 each act as proton acceptor in the active site.

This sequence belongs to the TrpA family. In terms of assembly, tetramer of two alpha and two beta chains.

The enzyme catalyses (1S,2R)-1-C-(indol-3-yl)glycerol 3-phosphate + L-serine = D-glyceraldehyde 3-phosphate + L-tryptophan + H2O. It participates in amino-acid biosynthesis; L-tryptophan biosynthesis; L-tryptophan from chorismate: step 5/5. In terms of biological role, the alpha subunit is responsible for the aldol cleavage of indoleglycerol phosphate to indole and glyceraldehyde 3-phosphate. The chain is Tryptophan synthase alpha chain from Methanopyrus kandleri (strain AV19 / DSM 6324 / JCM 9639 / NBRC 100938).